We begin with the raw amino-acid sequence, 626 residues long: Chaperone protein HtpG (626 aa).

The a; substrate-binding stretch occupies residues 1 to 338 (MTANKNQKKT…SNDLPLNVSR (338 aa)). The tract at residues 339–553 (EILQDHKLVY…SNEMSTQMAK (215 aa)) is b. The tract at residues 554–626 (LFSAAGQTVP…ARINDLLINN (73 aa)) is c.

This sequence belongs to the heat shock protein 90 family. As to quaternary structure, homodimer.

The protein resides in the cytoplasm. Its function is as follows. Molecular chaperone. Has ATPase activity. The sequence is that of Chaperone protein HtpG from Buchnera aphidicola subsp. Baizongia pistaciae (strain Bp).